Consider the following 674-residue polypeptide: MVHLNKTIQEGDNPDLTAERLTATFDTHAMAAQIYGGEMRARRRREITAKLAEIPELHDSMPLPYMTREEKIMESARKLTVLTQRMSEIIDPTDAGELYHLNNEVLGIEGNPMALHGVMFIPALNAQASDEQQAKWLIRALRREIIGTYAQTEMGHGTNLQNLETTATYDIGTQEFVLHTPKITALKWWPGNLGKSSNYAVVVAHMYIKGKNFGPHTFMVPLRDEKTHKPLPGITIGDIGPKMAYNIVDNGFLGFNNYRIPRTNLLMRHTKVEADGTYIKPPHAKINYSAMVHVRSYMLTGQAIMLSYALNIATRYSAVRRQGQIDKNEPEVKVLEYQTQQHRLFPFIARAYAFQFAGAETVKLYERVLKEMKSGNVSLMADLHALTSGLKSVVTHQTGEGIEQARMACGGHGYSMASYISEIYGVAIGGCTYEGENMVMLLQLARYLVKSAALVKSGKASQLGPLVAYLGARSEPTSLIDRVPNGGITEYIKTFQHIAKRQTLKAANKFFGLMENGEKREIAWNKSSVELNRASRLHTRLFIVEAFARRVNEIGDITIKEALSDLLHLHVNYELLDVATYALEDGFMSSTQLDYVRDQLYFYLQKIRPNAVSLLDSWEFSDRELRSVLGRRDGHVYENLFKWAKESPLNKTDVLPSVDTYLKPMMEKARQSKL.

Residues 149-152 (YAQT), 157-158 (GT), and Gly191 contribute to the FAD site. Substrate-binding positions include 285 to 288 (KINY) and Arg295. FAD contacts are provided by residues Arg320 and 340–343 (QQHR). Residues His342, Ser392, His396, and Gln404 each coordinate ATP. Residue Gly411 coordinates FAD. 433–434 (YE) provides a ligand contact to substrate. The active-site Proton acceptor is Glu434. Glu436 contacts FAD. Residues 533–536 (RASR) and Tyr581 each bind ATP. Positions 672 to 674 (SKL) match the Microbody targeting signal motif.

Belongs to the acyl-CoA oxidase family. In terms of assembly, homodimer. Forms a heterodimer with acox-1.2. Forms a heterodimer with acox-1.3; the interaction may be important for the stability of acox-1.3. FAD is required as a cofactor. Expressed in hypodermis and intestine.

The protein resides in the peroxisome. It catalyses the reaction nonanoyl-CoA + O2 = (2E)-nonenoyl-CoA + H2O2. The enzyme catalyses dodecanoyl-CoA + O2 = (2E)-dodecenoyl-CoA + H2O2. It carries out the reaction a 2,3-saturated acyl-CoA + O2 = a (2E)-enoyl-CoA + H2O2. The catalysed reaction is heptanoyl-CoA + O2 = (2E)-heptenoyl-CoA + H2O2. It catalyses the reaction (8R)-8-hydroxynonanoyl-CoA + O2 = (2E,8R)-8-hydroxynonenoyl-CoA + H2O2. The enzyme catalyses pentanoyl-CoA + O2 = (2E)-pentenoyl-CoA + H2O2. It carries out the reaction hexadecanoyl-CoA + O2 = (2E)-hexadecenoyl-CoA + H2O2. The catalysed reaction is IC-asc-C7-CoA + O2 = IC-asc-DeltaC7-CoA + H2O2. It catalyses the reaction IC-asc-C9-CoA + O2 = IC-asc-DeltaC9-CoA + H2O2. The enzyme catalyses asc-omegaC5-CoA + O2 = asc-omegaDeltaC5-CoA + H2O2. It carries out the reaction asc-C7-CoA + O2 = asc-DeltaC7-CoA + H2O2. The catalysed reaction is asc-omegaC7-CoA + O2 = asc-omegaDeltaC7-CoA + H2O2. It catalyses the reaction asc-C9-CoA + O2 = asc-DeltaC9-CoA + H2O2. The enzyme catalyses asc-C13-CoA + O2 = asc-DeltaC13-CoA + H2O2. It participates in lipid metabolism; peroxisomal fatty acid beta-oxidation. Its activity is regulated as follows. Activated by ATP. ATP binding leads to a conformational change that promotes FAD cofactor binding and enzyme activity. ATP binding likely occurs during acox-1.1 folding and/or dimer formation. Its function is as follows. Involved in the first step of peroxisomal beta-oxidation by catalyzing the desaturation of fatty acid-derived side chains. Specifically, catalyzes the desaturation of fatty acids heptanoyl-CoA (C7), nonanoyl-CoA (C9), dodecanoyl-CoA (C12) and to a lesser extent pentanoyl-CoA (C5) and hexadecanoyl-CoA (C16), and hydroxylated fatty acid hydroxynonanoyl-CoA. Also, catalyzes the desaturation fatty acid-derived side chains of ascaroside pheromones, which regulates development and behavior. Specifically, shortens ascaroside with 5-carbon omega side chain (asc-omega-C5), 7-carbon side chain (asc-C7), 9-carbon side chain (asc-C9), 11-carbon side chain (asc-C11), 13-carbon side chain (asc-C13), 15-carbon side chain (asc-C15) and to a lesser extent ascarosides with 7-omega-carbon side chain (asc-omega-C7). Also shortens indol-3-carbonyl(IC)-ascarosides with 7-carbon side chain (IC-asc-C7) and to a lesser extent (IC)-ascarosides with 9-carbon side chain (IC-asc-C9). May associate and regulate the folding and/or the catalytic activity of other acyl-coenzyme A oxidases including acox-1.2, acox-1.3, acox-1.4 and acox-3 modulating the type of ascarosides produced. In association with acox-1.3, catalyzes the desaturation of asc-C7-CoA but not of fatty acids or hydroxylated fatty acids. Involved in the biosynthesis of asc-C6-MK (daumone 2) and asc-delta-C9 (daumone 3) but not asc-C7 (daumone 1); daumones are pheromones produced during unfavourable growth conditions which promote entry into the dauer stage. This chain is Acyl-coenzyme A oxidase acox-1.1, found in Caenorhabditis elegans.